The primary structure comprises 97 residues: Protein transport protein SFT1 (97 aa).

Residues 1–74 (MSNSRYSQTE…RLTRSLKAGN (74 aa)) lie on the Cytoplasmic side of the membrane. Residues 7-69 (SQTESNNDRK…KNSSSRLTRS (63 aa)) enclose the t-SNARE coiled-coil homology domain. The helical; Anchor for type IV membrane protein transmembrane segment at 75-94 (SIWRMVGLALLIFFILYTLF) threads the bilayer. Residues 95–97 (KLF) are Lumenal-facing.

Component of a SNARE complex consisting of SED5, GOS1, YKT6 and SFT1.

The protein localises to the golgi apparatus membrane. In terms of biological role, vesicle SNARE required for retrograde transport within the Golgi complex. This is Protein transport protein SFT1 (SFT1) from Saccharomyces cerevisiae (strain ATCC 204508 / S288c) (Baker's yeast).